The following is a 175-amino-acid chain: Pycsar effector protein RsPycTM (175 aa).

3 helical membrane passes run 17 to 37 (AKNAALLTFCSVWMGAIITLL), 44 to 64 (PLGFDYAFKASLTVLFIAAII), and 146 to 166 (AGSLVLFAFGIMMVPPILFCI).

It is found in the cell inner membrane. Functionally, pycsar (pyrimidine cyclase system for antiphage resistance) provides immunity against bacteriophage. The pyrimidine cyclase (PycC) synthesizes cyclic nucleotides in response to infection; these serve as specific second messenger signals. The signals activate the nearby effector, leading to bacterial cell death and abortive phage infection. A clade A Pycsar system. The effector gene of a two-gene Pycsar system. Expression of this and uridylate cyclase RsPycC (AC A0A4R2TZQ0) probably confers resistance to bacteriophage. The genes are probably only expressed in response to bacteriophage infection. Probably only responds to cUMP (produced by its cognate NTP cyclase), acts by impairing membrane integrity. This is Pycsar effector protein RsPycTM from Rhizobium sp. (strain PP-F2F-G36).